The chain runs to 880 residues: Valine--tRNA ligase (880 aa).

The 'HIGH' region motif lies at 46 to 56 (PNVTGKLHLGH). Residues 520–524 (KMSKS) carry the 'KMSKS' region motif. Lys-523 is an ATP binding site. Residues 808–880 (LAGLINIEEE…KARIAELKEN (73 aa)) adopt a coiled-coil conformation.

This sequence belongs to the class-I aminoacyl-tRNA synthetase family. ValS type 1 subfamily. In terms of assembly, monomer.

Its subcellular location is the cytoplasm. The catalysed reaction is tRNA(Val) + L-valine + ATP = L-valyl-tRNA(Val) + AMP + diphosphate. In terms of biological role, catalyzes the attachment of valine to tRNA(Val). As ValRS can inadvertently accommodate and process structurally similar amino acids such as threonine, to avoid such errors, it has a 'posttransfer' editing activity that hydrolyzes mischarged Thr-tRNA(Val) in a tRNA-dependent manner. This chain is Valine--tRNA ligase, found in Lactococcus lactis subsp. lactis (strain IL1403) (Streptococcus lactis).